A 137-amino-acid chain; its full sequence is Large ribosomal subunit protein uL16 (137 aa).

The segment at 1–20 (MLQPSNRKYRKDFKGRNRGV) is disordered. Over residues 7–17 (RKYRKDFKGRN) the composition is skewed to basic residues.

Belongs to the universal ribosomal protein uL16 family. In terms of assembly, part of the 50S ribosomal subunit.

In terms of biological role, binds 23S rRNA and is also seen to make contacts with the A and possibly P site tRNAs. This is Large ribosomal subunit protein uL16 from Coxiella burnetii (strain CbuK_Q154) (Coxiella burnetii (strain Q154)).